A 1083-amino-acid polypeptide reads, in one-letter code: Solute carrier family 12 member 7 (1083 aa).

Positions 1 to 52 are disordered; it reads MPTNFTVVPVEAHADGGGDETAERTEAPGTPEGPEPERPSPGDGNPRENSPF. Over 1–119 the chain is Cytoplasmic; that stretch reads MPTNFTVVPV…RREAKAPRMG (119 aa). The span at 12 to 26 shows a compositional bias: basic and acidic residues; the sequence is AHADGGGDETAERTE. Residue threonine 30 is modified to Phosphothreonine. Phosphoserine is present on residues serine 50 and serine 62. The chain crosses the membrane as a discontinuously helical span at residues 120–142; the sequence is TFIGVYLPCLQNILGVILFLRLT. Asparagine 131 and isoleucine 132 together coordinate K(+). Valine 135 lines the chloride pocket. Over 143–149 the chain is Extracellular; that stretch reads WIVGVAG. Residues 150-172 traverse the membrane as a helical segment; the sequence is VLESFLIVAMCCTCTMLTAISMS. Residues 173-196 lie on the Cytoplasmic side of the membrane; sequence AIATNGVVPAGGSYYMISRSLGPE. The helical transmembrane segment at 197-225 threads the bilayer; that stretch reads FGGAVGLCFYLGTTFAGAMYILGTIEIFL. Residues 226–249 lie on the Extracellular side of the membrane; the sequence is TYISPGAAIFQAEAAGGEAAAMLH. Transmembrane regions (helical) follow at residues 250–270 and 272–300; these read NMRV…FVGV and YVNK…KSAF. Topologically, residues 301–419 are extracellular; sequence DPPDIPVCLL…PYVLTDIAAS (119 aa). 2 cysteine pairs are disulfide-bonded: cysteine 308–cysteine 323 and cysteine 343–cysteine 352. The N-linked (GlcNAc...) asparagine glycan is linked to asparagine 312. An N-linked (GlcNAc...) asparagine glycan is attached at asparagine 360. The chain crosses the membrane as a helical span at residues 420–440; sequence FTLLVGIYFPSVTGIMAGSNR. K(+) contacts are provided by proline 429 and threonine 432. Chloride is bound at residue proline 429. Chloride is bound by residues glycine 433 and isoleucine 434. At 441–450 the chain is on the cytoplasmic side; sequence SGDLKDAQKS. The chain crosses the membrane as a helical span at residues 451 to 473; it reads IPTGTILAIVTTSFIYLSCIVLF. At 474–504 the chain is on the extracellular side; it reads GACIEGVVLRDKFGEALQGNLVIGMLAWPSP. The chain crosses the membrane as a helical span at residues 505–531; the sequence is WVIVIGSFFSTCGAGLQSLTGAPRLLQ. The Cytoplasmic segment spans residues 532-554; that stretch reads AIARDGIVPFLQVFGHGKANGEP. A run of 2 helical transmembrane segments spans residues 555–571 and 574–598; these read TWAL…GILI and LDSV…ACAV. Tyrosine 589 lines the chloride pocket. At 599–612 the chain is on the cytoplasmic side; that stretch reads QTLLRTPNWRPRFK. The next 2 helical transmembrane spans lie at 613–632 and 636–651; these read FYHW…LMFI and YYAL…IYKY. Over 652–1083 the chain is Cytoplasmic; it reads IEYRGAEKEW…GGREVITIYS (432 aa). Residues 664–680 form a scissor helix region; it reads GIRGLSLNAARYALLRV. Threonine 973 and threonine 980 each carry phosphothreonine.

This sequence belongs to the SLC12A transporter family. K/Cl co-transporter subfamily. As to quaternary structure, homodimer; adopts a domain-swap conformation at the scissor helices connecting the transmembrane domain and C-terminal domain. Heterodimer with K-Cl cotransporter SLC12A5. In terms of tissue distribution, detected in muscle, brain, lung, heart and kidney.

The protein resides in the cell membrane. The catalysed reaction is K(+)(in) + chloride(in) = K(+)(out) + chloride(out). Activated by N-ethylmaleimide (NEM). Inhibited by furosemide, DIDS and bumetanide. The inhibition is much stronger in the presence of 50 mM K(+) in the uptake medium. Inhibited by DIOA. Inhibited by WNK3. In terms of biological role, mediates electroneutral potassium-chloride cotransport when activated by cell swelling. May mediate K(+) uptake into Deiters' cells in the cochlea and contribute to K(+) recycling in the inner ear. Important for the survival of cochlear outer and inner hair cells and the maintenance of the organ of Corti. May be required for basolateral Cl(-) extrusion in the kidney and contribute to renal acidification. The protein is Solute carrier family 12 member 7 of Homo sapiens (Human).